Consider the following 82-residue polypeptide: Small ribosomal subunit protein bS16 (82 aa).

Belongs to the bacterial ribosomal protein bS16 family.

This is Small ribosomal subunit protein bS16 from Enterobacter sp. (strain 638).